The chain runs to 202 residues: Putative pre-16S rRNA nuclease (202 aa).

Disordered stretches follow at residues 1 to 27 (MSGS…GVRI) and 170 to 202 (GCAA…SDER). A compositionally biased stretch (basic and acidic residues) spans 9–20 (GDSRPGDSRPGD).

This sequence belongs to the YqgF nuclease family.

The protein resides in the cytoplasm. Its function is as follows. Could be a nuclease involved in processing of the 5'-end of pre-16S rRNA. In Frankia casuarinae (strain DSM 45818 / CECT 9043 / HFP020203 / CcI3), this protein is Putative pre-16S rRNA nuclease.